The primary structure comprises 216 residues: Nucleoside triphosphate pyrophosphatase (216 aa).

Asp-82 (proton acceptor) is an active-site residue.

This sequence belongs to the Maf family. The cofactor is a divalent metal cation.

It localises to the cytoplasm. The enzyme catalyses a ribonucleoside 5'-triphosphate + H2O = a ribonucleoside 5'-phosphate + diphosphate + H(+). It catalyses the reaction a 2'-deoxyribonucleoside 5'-triphosphate + H2O = a 2'-deoxyribonucleoside 5'-phosphate + diphosphate + H(+). In terms of biological role, nucleoside triphosphate pyrophosphatase. May have a dual role in cell division arrest and in preventing the incorporation of modified nucleotides into cellular nucleic acids. The chain is Nucleoside triphosphate pyrophosphatase from Mycobacterium marinum (strain ATCC BAA-535 / M).